The sequence spans 740 residues: Phosphoribosylformylglycinamidine synthase subunit PurL (740 aa).

H54 is an active-site residue. 2 residues coordinate ATP: Y57 and K96. E98 is a Mg(2+) binding site. Residues S99–H102 and R121 each bind substrate. H100 functions as the Proton acceptor in the catalytic mechanism. D122 is a binding site for Mg(2+). Q245 lines the substrate pocket. D273 contacts Mg(2+). E317–Q319 provides a ligand contact to substrate. ATP-binding residues include D499 and G536. Residue N537 participates in Mg(2+) binding. S539 is a substrate binding site.

This sequence belongs to the FGAMS family. In terms of assembly, monomer. Part of the FGAM synthase complex composed of 1 PurL, 1 PurQ and 2 PurS subunits.

It localises to the cytoplasm. It carries out the reaction N(2)-formyl-N(1)-(5-phospho-beta-D-ribosyl)glycinamide + L-glutamine + ATP + H2O = 2-formamido-N(1)-(5-O-phospho-beta-D-ribosyl)acetamidine + L-glutamate + ADP + phosphate + H(+). The protein operates within purine metabolism; IMP biosynthesis via de novo pathway; 5-amino-1-(5-phospho-D-ribosyl)imidazole from N(2)-formyl-N(1)-(5-phospho-D-ribosyl)glycinamide: step 1/2. Part of the phosphoribosylformylglycinamidine synthase complex involved in the purines biosynthetic pathway. Catalyzes the ATP-dependent conversion of formylglycinamide ribonucleotide (FGAR) and glutamine to yield formylglycinamidine ribonucleotide (FGAM) and glutamate. The FGAM synthase complex is composed of three subunits. PurQ produces an ammonia molecule by converting glutamine to glutamate. PurL transfers the ammonia molecule to FGAR to form FGAM in an ATP-dependent manner. PurS interacts with PurQ and PurL and is thought to assist in the transfer of the ammonia molecule from PurQ to PurL. This is Phosphoribosylformylglycinamidine synthase subunit PurL from Anoxybacillus flavithermus (strain DSM 21510 / WK1).